The chain runs to 228 residues: Cytidylate kinase (228 aa).

An ATP-binding site is contributed by 17 to 25 (GPTASGKGT).

It belongs to the cytidylate kinase family. Type 1 subfamily.

It localises to the cytoplasm. It carries out the reaction CMP + ATP = CDP + ADP. The enzyme catalyses dCMP + ATP = dCDP + ADP. The chain is Cytidylate kinase from Burkholderia mallei (strain NCTC 10247).